The primary structure comprises 218 residues: Ribose-5-phosphate isomerase A (218 aa).

Residues 28-31 (TGST), 81-84 (DGAD), and 94-97 (KGGG) contribute to the substrate site. The active-site Proton acceptor is the Glu-103. Residue Lys-121 coordinates substrate.

Belongs to the ribose 5-phosphate isomerase family. In terms of assembly, homodimer.

It carries out the reaction aldehydo-D-ribose 5-phosphate = D-ribulose 5-phosphate. The protein operates within carbohydrate degradation; pentose phosphate pathway; D-ribose 5-phosphate from D-ribulose 5-phosphate (non-oxidative stage): step 1/1. Catalyzes the reversible conversion of ribose-5-phosphate to ribulose 5-phosphate. The protein is Ribose-5-phosphate isomerase A of Aliivibrio fischeri (strain ATCC 700601 / ES114) (Vibrio fischeri).